A 131-amino-acid polypeptide reads, in one-letter code: Protein ApaG (131 aa).

An ApaG domain is found at 3 to 127 (RAVTRQIEVT…FSLDSPDGGK (125 aa)).

The chain is Protein ApaG from Bradyrhizobium sp. (strain BTAi1 / ATCC BAA-1182).